Consider the following 322-residue polypeptide: tRNA U34 carboxymethyltransferase (322 aa).

Carboxy-S-adenosyl-L-methionine is bound by residues Lys91, Trp105, Lys110, Gly129, Met195, Tyr199, and Arg314.

This sequence belongs to the class I-like SAM-binding methyltransferase superfamily. CmoB family. As to quaternary structure, homotetramer.

It catalyses the reaction carboxy-S-adenosyl-L-methionine + 5-hydroxyuridine(34) in tRNA = 5-carboxymethoxyuridine(34) in tRNA + S-adenosyl-L-homocysteine + H(+). Functionally, catalyzes carboxymethyl transfer from carboxy-S-adenosyl-L-methionine (Cx-SAM) to 5-hydroxyuridine (ho5U) to form 5-carboxymethoxyuridine (cmo5U) at position 34 in tRNAs. The protein is tRNA U34 carboxymethyltransferase of Ectopseudomonas mendocina (strain ymp) (Pseudomonas mendocina).